The following is a 385-amino-acid chain: Putative type I restriction enzyme specificity subunit S.HindORF215P (385 aa).

This sequence belongs to the type-I restriction system S methylase family.

Functionally, a putative specificity subunit for a type I restriction enzyme; the corresponding endonuclease and methylase subunits have multiple frameshifts and are probably not expressed. This chain is Putative type I restriction enzyme specificity subunit S.HindORF215P, found in Haemophilus influenzae (strain ATCC 51907 / DSM 11121 / KW20 / Rd).